Reading from the N-terminus, the 303-residue chain is MAPPALQAQPPGGSQLRFLLFLLLLLLLLSWPSQGDALAMPEQRPSGPESQLNADELRGRFQDLLSRLHANQSREDSNSEPSPDPAVRILSPEVRLGSHGQLLLRVNRASLSQGLPEAYRVHRALLLLTPTARPWDITRPLKRALSLRGPRAPALRLRLTPPPDLAMLPSGGTQLELRLRVAAGRGRRSAHAHPRDSCPLGPGRCCHLETVQATLEDLGWSDWVLSPRQLQLSMCVGECPHLYRSANTHAQIKARLHGLQPDKVPAPCCVPSSYTPVVLMHRTDSGVSLQTYDDLVARGCHCA.

Residues 1-30 form the signal peptide; that stretch reads MAPPALQAQPPGGSQLRFLLFLLLLLLLLS. Residues 31 to 188 constitute a propeptide that is removed on maturation; that stretch reads WPSQGDALAM…LRVAAGRGRR (158 aa). N-linked (GlcNAc...) asparagine glycosylation occurs at Asn-71. 4 disulfides stabilise this stretch: Cys-198–Cys-205, Cys-206–Cys-269, Cys-235–Cys-300, and Cys-239–Cys-302.

It belongs to the TGF-beta family. As to quaternary structure, homodimer; disulfide-linked. Interacts with GFRAL and RET; ligand of GFRAL, which mediates GDF15 internalization and cellular signaling through interaction with RET via the formation of a 2:2:2 ternary complex composed of GDF15, GFRAL and RET. In terms of tissue distribution, detected in plasma (at protein level). Highly expressed in liver. Expressed in the distal small intestine, colon and kidney. Expressed in skeletal muscle in response to mitochondrial stress. Expressed by cardiomyocytes, expression is highly increased in heart diseases. Also detected in subcutaneous fat.

The protein resides in the secreted. Functionally, hormone produced in response to various stresses to confer information about those stresses to the brain, and trigger an aversive response, characterized by nausea and/or loss of appetite. The aversive response is both required to reduce continuing exposure to those stresses at the time of exposure and to promote avoidance behavior in the future. Acts by binding to its receptor, GFRAL, activating GFRAL-expressing neurons localized in the area postrema and nucleus tractus solitarius of the brainstem. It then triggers the activation of neurons localized within the parabrachial nucleus and central amygdala, which constitutes part of the 'emergency circuit' that shapes responses to stressful conditions. The GDF15-GFRAL signal induces expression of genes involved in metabolism, such as lipid metabolism in adipose tissues. Required for avoidance behavior in response to food allergens: induced downstream of mast cell activation to promote aversion and minimize harmful effects of exposure to noxious substances. In addition to suppress appetite, also promotes weight loss by enhancing energy expenditure in muscle: acts by increasing calcium futile cycling in muscle. Contributes to the effect of metformin, an anti-diabetic drug, on appetite reduction and weight loss: produced in the kidney in response to metformin treatment, thereby activating the GDF15-GFRAL response, leading to reduced appetite and weight. Produced in response to anticancer drugs, such as camptothecin or cisplatin, promoting nausea and contributing to malnutrition. Overproduced in many cancers, promoting anorexia in cancer (cachexia). Responsible for the risk of nausea during pregnancy: high levels of GDF15 during pregnancy, mostly originating from embryos, are associated with increased nausea. Maternal sensitivity to nausea is probably determined by pre-pregnancy exposure to GDF15, females with naturally high level of GDF15 being less susceptible to nausea than female mice with low levels of GDF15 before pregnancy. Promotes metabolic adaptation in response to systemic inflammation caused by bacterial and viral infections in order to promote tissue tolerance and prevent tissue damage. Required for tissue tolerance in response to myocardial infarction by acting as an inhibitor of leukocyte integring activation, thereby protecting against cardiac rupture. Inhibits growth hormone signaling on hepatocytes. The chain is Growth/differentiation factor 15 from Mus musculus (Mouse).